Reading from the N-terminus, the 327-residue chain is 3' cyclic ADP-D-ribose synthase AaTIR (327 aa).

The TIR domain stretch occupies residues 10 to 120 (VALSFAGENR…GILKTIGYIN (111 aa)). K229 is an active-site residue.

As to quaternary structure, homodimer.

It catalyses the reaction NADP(+) + H2O = ADP-D-ribose 2'-phosphate + nicotinamide + H(+). The enzyme catalyses NAD(+) = 3'cADPR + nicotinamide + H(+). Its function is as follows. NAD(+) hydrolase (NADase) that generates 3'cADPR, a cyclization variant of cyclic ADP-D-ribose (also called v2-cADPR). Also cleaves NADP(+), but does not cyclize the product. This is 3' cyclic ADP-D-ribose synthase AaTIR from Aquimarina amphilecti.